The following is a 241-amino-acid chain: Platelet-derived growth factor subunit B (241 aa).

Residues 1 to 20 form the signal peptide; the sequence is MNRCWALFLPLCCYLRLVSA. A propeptide spans 21–81 (removed in mature form); it reads EGDPIPEELY…ELESSSRGRR (61 aa). N63 carries an N-linked (GlcNAc...) asparagine glycan. Cystine bridges form between C97/C141, C130/C178, and C134/C180. The propeptide at 191 to 241 is removed in mature form; that stretch reads RSPGTSREQRAKTPQARVTIRTVRIRRPPKGKHRKFKHTHDKAALKETLGA. Positions 217 to 230 are enriched in basic residues; it reads RPPKGKHRKFKHTH. Residues 217–241 are disordered; the sequence is RPPKGKHRKFKHTHDKAALKETLGA.

This sequence belongs to the PDGF/VEGF growth factor family. As to quaternary structure, antiparallel homodimer; disulfide-linked. Antiparallel heterodimer with PDGFA; disulfide-linked. The PDGFB homodimer interacts with PDGFRA and PDGFRB homodimers, and with heterodimers formed by PDGFRA and PDGFRB. The heterodimer composed of PDGFA and PDGFB interacts with PDGFRB homodimers, and with heterodimers formed by PDGFRA and PDGFRB. Interacts with XLKD1. Interacts with LRP1. Interacts with SORL1 (via the N-terminal ectodomain). Interacts with CD82; this interaction inhibits PDGFB-mediated signaling pathway. Localized to vascular smooth muscle cells. Also weakly expressed by cortical interstitial cells but absent in tubules. Up-regulated in areas of renal fibrosis. In mice with unilateral ureteral obstruction, an increased expression in interstitial cells and in some tubules observed after day 4.

It localises to the secreted. In terms of biological role, growth factor that plays an essential role in the regulation of embryonic development, cell proliferation, cell migration, survival and chemotaxis. Potent mitogen for cells of mesenchymal origin. Required for normal proliferation and recruitment of pericytes and vascular smooth muscle cells in the central nervous system, skin, lung, heart and placenta. Required for normal blood vessel development, and for normal development of kidney glomeruli. Plays an important role in wound healing. Signaling is modulated by the formation of heterodimers with PDGFA. The polypeptide is Platelet-derived growth factor subunit B (Pdgfb) (Mus musculus (Mouse)).